We begin with the raw amino-acid sequence, 148 residues long: Hemoglobin subunit beta-B (148 aa).

Residues 3 to 148 enclose the Globin domain; that stretch reads DWTDAERAAI…VVSALGRQYH (146 aa). The heme b site is built by histidine 64 and histidine 93.

This sequence belongs to the globin family. As to quaternary structure, heterotetramer of two alpha chains and two beta chains. In terms of tissue distribution, red blood cells.

Functionally, involved in oxygen transport from gills to the various peripheral tissues. The polypeptide is Hemoglobin subunit beta-B (hbb2) (Seriola quinqueradiata (Five-ray yellowtail)).